Consider the following 256-residue polypeptide: 3-dehydroquinate dehydratase (256 aa).

3-dehydroquinate contacts are provided by residues 46-48 and Arg-82; that span reads EWR. The active-site Proton donor/acceptor is His-144. The Schiff-base intermediate with substrate role is filled by Lys-171. Positions 213, 232, and 236 each coordinate 3-dehydroquinate.

It belongs to the type-I 3-dehydroquinase family. As to quaternary structure, homodimer.

It catalyses the reaction 3-dehydroquinate = 3-dehydroshikimate + H2O. Its pathway is metabolic intermediate biosynthesis; chorismate biosynthesis; chorismate from D-erythrose 4-phosphate and phosphoenolpyruvate: step 3/7. In terms of biological role, involved in the third step of the chorismate pathway, which leads to the biosynthesis of aromatic amino acids. Catalyzes the cis-dehydration of 3-dehydroquinate (DHQ) and introduces the first double bond of the aromatic ring to yield 3-dehydroshikimate. This is 3-dehydroquinate dehydratase from Shouchella clausii (strain KSM-K16) (Alkalihalobacillus clausii).